A 191-amino-acid polypeptide reads, in one-letter code: Putative glutathione-dependent formaldehyde-activating enzyme (191 aa).

In terms of domain architecture, CENP-V/GFA spans 20–166 (FPGGNLYCKC…FHSLGLETYD (147 aa)). Positions 27, 29, 48, 50, 53, 95, and 98 each coordinate Zn(2+).

Belongs to the Gfa family. Requires Zn(2+) as cofactor.

The enzyme catalyses S-(hydroxymethyl)glutathione = glutathione + formaldehyde. It functions in the pathway one-carbon metabolism; formaldehyde degradation; formate from formaldehyde (glutathione route): step 1/3. In terms of biological role, catalyzes the condensation of formaldehyde and glutathione to S-hydroxymethylglutathione. This chain is Putative glutathione-dependent formaldehyde-activating enzyme, found in Aspergillus niger (strain ATCC MYA-4892 / CBS 513.88 / FGSC A1513).